A 314-amino-acid polypeptide reads, in one-letter code: MLESKLKAPVFTATTQGDHYGEFVLEPLERGFGVTLGNPLRRILLSSIPGTAVTSVYIEDVLHEFSTIPGVKEDVVEIILNLKELVVRFLDPKMASTTLILRAEGPKEVRAGDFTPSADVEIMNPDLHIATLEEGGKLYMEVRVDRGVGYVPAERHGIKDRINAIPVDAIFSPVRRVAFQVEDTRLGQRTDLDKLTLRIWTDGSVTPLEALNQAVAILKEHLNYFANPEASLLPTPEVSKGEKRESAEEDLDLPLEELGLSTRVLHSLKEEGIESVRALLALNLKDLRNIPGIGERSLEEIRQALAKKGFTLKE.

The segment at 1-229 is alpha N-terminal domain (alpha-NTD); it reads MLESKLKAPV…EHLNYFANPE (229 aa). Residues 246 to 314 form an alpha C-terminal domain (alpha-CTD) region; sequence SAEEDLDLPL…LAKKGFTLKE (69 aa).

Belongs to the RNA polymerase alpha chain family. As to quaternary structure, homodimer. The RNAP catalytic core consists of 2 alpha, 1 beta, 1 beta' and 1 omega subunit. When a sigma factor is associated with the core the holoenzyme is formed, which can initiate transcription.

It catalyses the reaction RNA(n) + a ribonucleoside 5'-triphosphate = RNA(n+1) + diphosphate. In terms of biological role, DNA-dependent RNA polymerase catalyzes the transcription of DNA into RNA using the four ribonucleoside triphosphates as substrates. This chain is DNA-directed RNA polymerase subunit alpha (rpoA), found in Thermus aquaticus.